The primary structure comprises 419 residues: Tryptophan synthase beta chain (419 aa).

Lys86 carries the N6-(pyridoxal phosphate)lysine modification. Residues 394–403 show a composition bias toward basic and acidic residues; it reads VEQQKVEQQK. The tract at residues 394-419 is disordered; the sequence is VEQQKVEQQKADNQNTEKNNQESGNE. The span at 404–419 shows a compositional bias: polar residues; it reads ADNQNTEKNNQESGNE.

It belongs to the TrpB family. As to quaternary structure, tetramer of two alpha and two beta chains. Pyridoxal 5'-phosphate serves as cofactor.

The catalysed reaction is (1S,2R)-1-C-(indol-3-yl)glycerol 3-phosphate + L-serine = D-glyceraldehyde 3-phosphate + L-tryptophan + H2O. The protein operates within amino-acid biosynthesis; L-tryptophan biosynthesis; L-tryptophan from chorismate: step 5/5. Its function is as follows. The beta subunit is responsible for the synthesis of L-tryptophan from indole and L-serine. The polypeptide is Tryptophan synthase beta chain (Shewanella halifaxensis (strain HAW-EB4)).